A 303-amino-acid polypeptide reads, in one-letter code: Movement protein (303 aa).

Residues 1–18 (MSNIVSPFSGSSRTTSDV) show a composition bias toward polar residues. Disordered stretches follow at residues 1 to 24 (MSNIVSPFSGSSRTTSDVGKQAGG) and 267 to 303 (EESESPSALGRGVKDSKSVSASSVAGLPVSSPTLRIK).

Belongs to the bromovirus movement protein family. Post-translationally, phosphorylated by host.

It localises to the host cell junction. The protein resides in the host plasmodesma. Transports viral genome to neighboring plant cells directly through plasmosdesmata, without any budding. The movement protein allows efficient cell to cell propagation, by bypassing the host cell wall barrier. Acts by forming a tubular structure at the host plasmodesmata, enlarging it enough to allow free passage of virion capsids. This is Movement protein from Brome mosaic virus (BMV).